Here is a 200-residue protein sequence, read N- to C-terminus: LHFPL tetraspan subfamily member 7 protein (200 aa).

4 helical membrane-spanning segments follow: residues V5 to F27, V68 to L88, A113 to I133, and L150 to I170.

The protein belongs to the TMEM211 family.

The protein localises to the membrane. The chain is LHFPL tetraspan subfamily member 7 protein from Homo sapiens (Human).